The primary structure comprises 57 residues: Small ribosomal subunit protein bS21 (57 aa).

The interval 35-57 (RERYEKPSLRRKRKQEAARKRNR) is disordered.

This sequence belongs to the bacterial ribosomal protein bS21 family.

The sequence is that of Small ribosomal subunit protein bS21 from Thermosynechococcus vestitus (strain NIES-2133 / IAM M-273 / BP-1).